Reading from the N-terminus, the 181-residue chain is uncharacterized protein (181 aa).

This is an uncharacterized protein from Enterobacteria phage T4 (Bacteriophage T4).